The sequence spans 491 residues: Glutamyl-tRNA(Gln) amidotransferase subunit A (491 aa).

Catalysis depends on charge relay system residues Lys78 and Ser158. Ser182 functions as the Acyl-ester intermediate in the catalytic mechanism.

It belongs to the amidase family. GatA subfamily. As to quaternary structure, heterotrimer of A, B and C subunits.

It catalyses the reaction L-glutamyl-tRNA(Gln) + L-glutamine + ATP + H2O = L-glutaminyl-tRNA(Gln) + L-glutamate + ADP + phosphate + H(+). In terms of biological role, allows the formation of correctly charged Gln-tRNA(Gln) through the transamidation of misacylated Glu-tRNA(Gln) in organisms which lack glutaminyl-tRNA synthetase. The reaction takes place in the presence of glutamine and ATP through an activated gamma-phospho-Glu-tRNA(Gln). This Nitrobacter hamburgensis (strain DSM 10229 / NCIMB 13809 / X14) protein is Glutamyl-tRNA(Gln) amidotransferase subunit A.